The chain runs to 273 residues: Secretory carrier-associated membrane protein 6 (273 aa).

The interval 1-69 (MHHDPNPFDE…MGDSKSKARE (69 aa)) is disordered. Residues 1–131 (MHHDPNPFDE…LQKLQYLAFA (131 aa)) are Cytoplasmic-facing. A compositionally biased stretch (gly residues) spans 20–30 (NGGGGGGGGGS). Residues 68–94 (RELSSWETDLKRREADIKRREEALRNA) are a coiled coil. 4 consecutive transmembrane segments (helical) span residues 132-152 (SWLGIVLCLSWNFIAVIVCWI), 159-179 (LFFLATIYALLGIPLSYLIWY), 194-214 (FGWFFLCYLIHIGFCIIAAIA), and 239-259 (IIGIFYFVGFALFCLETLLSI). Residues 260 to 273 (GVLQRVYMYFRGNK) are Cytoplasmic-facing.

Belongs to the SCAMP family.

It localises to the cell membrane. Its subcellular location is the cytoplasmic vesicle. It is found in the secretory vesicle membrane. In terms of biological role, probably involved in membrane trafficking. The polypeptide is Secretory carrier-associated membrane protein 6 (SCAMP6) (Oryza sativa subsp. japonica (Rice)).